The following is a 147-amino-acid chain: NADH-quinone oxidoreductase subunit A (147 aa).

A run of 3 helical transmembrane segments spans residues 16-36 (FAIF…GGWF), 68-88 (FYLV…LFAW), and 97-117 (WVGF…LVYL).

The protein belongs to the complex I subunit 3 family. NDH-1 is composed of 13 different subunits. Subunits NuoA, H, J, K, L, M, N constitute the membrane sector of the complex.

The protein resides in the cell inner membrane. It catalyses the reaction a quinone + NADH + 5 H(+)(in) = a quinol + NAD(+) + 4 H(+)(out). Functionally, NDH-1 shuttles electrons from NADH, via FMN and iron-sulfur (Fe-S) centers, to quinones in the respiratory chain. The immediate electron acceptor for the enzyme in this species is believed to be ubiquinone. Couples the redox reaction to proton translocation (for every two electrons transferred, four hydrogen ions are translocated across the cytoplasmic membrane), and thus conserves the redox energy in a proton gradient. The sequence is that of NADH-quinone oxidoreductase subunit A from Salmonella paratyphi A (strain ATCC 9150 / SARB42).